A 118-amino-acid polypeptide reads, in one-letter code: Thioredoxin H-type (118 aa).

One can recognise a Thioredoxin domain in the interval 2–114 (AAEEGQVIGC…LQQTIAKHMA (113 aa)). Catalysis depends on nucleophile residues Cys-40 and Cys-43. A disulfide bridge connects residues Cys-40 and Cys-43.

The protein belongs to the thioredoxin family. Plant H-type subfamily.

Its subcellular location is the cytoplasm. Functionally, participates in various redox reactions through the reversible oxidation of the active center dithiol to a disulfide. The H form is known to activate a number of cytosolic enzymes. The sequence is that of Thioredoxin H-type from Ricinus communis (Castor bean).